The following is a 1070-amino-acid chain: MLGDGNEGISTIPGFNQIQFEGFCRFIDQGLTEELYKFPKIEDTDQEIEFQLFVETYQLVEPLIKERDAVYESLTYSSELYVSAGLIWKNSRDMQEQTFFIGNIPLMNSLGTSIVNGIYRIVINQILQSPGIYYRSELDHNGISVYTGTIISDWGGRSELEIDRKARIWARVSRKQKISILVLSSAMGLNLREILENVCYPEIFLSFLSDKERKKIGSKENAILEFYQQFACVGGDPVFSESLCKELQKKFFQQRCELGRIGRRNMNRRLNLDIPQNNTFLLPRDILAAADHLIGLKFGMGALDDMNHLKNKRIRSVADLLQDQFGLALVRLENVVRGTICGAIRHKLIPTPQNLVTSTPLTTTYESFFGLHPLSQVLDRTNPLTQIVHGRKLSYLGPGGLTGRTASFRIRDIHPSHYGRICPIDTSEGINVGLIGSLAIHAKIGHWGSLESPFYEISERSTGVRMLYLSPGRDEYYMVAAGNSLALNRDIQEEQVVPARYRQEFLTIAWEQVHLRSIFPFQYFSIGASLIPFIEHNDANRALMSSNMQRQAVPLSRSEKCIVGTGLERQAALDSGALAIAEREGRVVYTNTDKILLAGNGDILSIPLVIYQRSNKNTCMHQKLQVPRGKCIKKGQILADGAATVGGELALGKNVLVAYMPWEGYNSEDAVLISERLVYEDIYTSFHIRKYEIQTHVTSQGPEKVTNEIPHLEAHLLRNLDKNGIVMLGSWVETGDILVGKLTPQVVKESSYAPEDRLLRAILGIQVSTSKETCLKLLIGGRGRVIDVRWIQKRGGSSYNPETIRVYILQKREIKVGDKVAGRHGNKGIISKILPRQDMPYLQDGRSVDMVFNPLGVPSRMNVGQIFECSLGLAGSLLDRHYRIAPFDERYEQEASRKLVFSELYEASKQTANPWVFEPEYPGKSRIFDGRTGNPFEQPVIIGKPYILKLIHQVDDKIHGRSSGHYALVTQQPLRGRAKQGGQRVGEMEVWALEGFGVAHILQEMLTYKSDHIRARQEVLGTTIIGGTIPNPEDAPESFRLLVRELRSLALELNHFLVSEKNFQINRKEA.

This sequence belongs to the RNA polymerase beta chain family. In plastids the minimal PEP RNA polymerase catalytic core is composed of four subunits: alpha, beta, beta', and beta''. When a (nuclear-encoded) sigma factor is associated with the core the holoenzyme is formed, which can initiate transcription.

It localises to the plastid. It is found in the chloroplast. It carries out the reaction RNA(n) + a ribonucleoside 5'-triphosphate = RNA(n+1) + diphosphate. Its function is as follows. DNA-dependent RNA polymerase catalyzes the transcription of DNA into RNA using the four ribonucleoside triphosphates as substrates. The chain is DNA-directed RNA polymerase subunit beta from Nicotiana tomentosiformis (Tobacco).